Here is a 610-residue protein sequence, read N- to C-terminus: UvrABC system protein C (610 aa).

One can recognise a GIY-YIG domain in the interval 16 to 94 (HQPGVYRMYN…IKQYLPKYNV (79 aa)). Residues 204–239 (NQVLELLVQKMEIASQQLKFEDAAKFRDQIQAIRRV) form the UVR domain.

This sequence belongs to the UvrC family. In terms of assembly, interacts with UvrB in an incision complex.

Its subcellular location is the cytoplasm. Functionally, the UvrABC repair system catalyzes the recognition and processing of DNA lesions. UvrC both incises the 5' and 3' sides of the lesion. The N-terminal half is responsible for the 3' incision and the C-terminal half is responsible for the 5' incision. The protein is UvrABC system protein C of Vibrio vulnificus (strain CMCP6).